Reading from the N-terminus, the 206-residue chain is Shieldin complex subunit 1 (206 aa).

Composition is skewed to polar residues over residues 1–15 (MATQETTPGSQTEES), 33–43 (RPSQQTNSEAF), and 60–69 (DSSNLNTEQN). 2 disordered regions span residues 1–21 (MATQETTPGSQTEESNALDLP) and 33–69 (RPSQQTNSEAFSSEEACSIPCSSDVDPDSSNLNTEQN).

As to quaternary structure, component of the shieldin complex, consisting of SHLD1, SHLD2, SHLD3 and MAD2L2/REV7. Within the complex, SHLD2 forms a scaffold which interacts with a SHLD3-MAD2L2 subcomplex via its N-terminus, and with SHLD1 via its C-terminus. Interacts with ASTE1.

It localises to the chromosome. In terms of biological role, component of the shieldin complex, which plays an important role in repair of DNA double-stranded breaks (DSBs). During G1 and S phase of the cell cycle, the complex functions downstream of TP53BP1 to promote non-homologous end joining (NHEJ) and suppress DNA end resection. Mediates various NHEJ-dependent processes including immunoglobulin class-switch recombination, and fusion of unprotected telomeres. This chain is Shieldin complex subunit 1, found in Bos taurus (Bovine).